A 163-amino-acid chain; its full sequence is MASVSQAVRSLFLKEFVNAFFLSMRYFFKQKATVNYPFEKGPVSPRFRGEHALRRYPNGEERCIACKLCEAICPAQAITIEAGPRRNDGTRRTVRYDIDMVKCIYCGFCQEACPVDAIVEGPNFEFSTESREELYFDKAKLLANGDRWEREIARNLAQDAPYR.

4Fe-4S ferredoxin-type domains follow at residues 53-83 (LRRY…IEAG) and 94-123 (VRYD…EGPN). Residues Cys63, Cys66, Cys69, Cys73, Cys103, Cys106, Cys109, and Cys113 each coordinate [4Fe-4S] cluster.

Belongs to the complex I 23 kDa subunit family. In terms of assembly, NDH-1 is composed of 14 different subunits. Subunits NuoA, H, J, K, L, M, N constitute the membrane sector of the complex. The cofactor is [4Fe-4S] cluster.

Its subcellular location is the cell inner membrane. The catalysed reaction is a quinone + NADH + 5 H(+)(in) = a quinol + NAD(+) + 4 H(+)(out). NDH-1 shuttles electrons from NADH, via FMN and iron-sulfur (Fe-S) centers, to quinones in the respiratory chain. The immediate electron acceptor for the enzyme in this species is believed to be ubiquinone. Couples the redox reaction to proton translocation (for every two electrons transferred, four hydrogen ions are translocated across the cytoplasmic membrane), and thus conserves the redox energy in a proton gradient. The protein is NADH-quinone oxidoreductase subunit I of Allorhizobium ampelinum (strain ATCC BAA-846 / DSM 112012 / S4) (Agrobacterium vitis (strain S4)).